A 158-amino-acid chain; its full sequence is Phosphopantetheine adenylyltransferase (158 aa).

Substrate is bound at residue Thr-10. ATP-binding positions include 10–11 (TF) and His-18. Residues Lys-42, Leu-74, and Arg-88 each contribute to the substrate site. Residues 89–91 (GIR), Glu-99, and 124–130 (WRYLSST) each bind ATP.

This sequence belongs to the bacterial CoaD family. Homohexamer. Mg(2+) serves as cofactor.

It localises to the cytoplasm. It catalyses the reaction (R)-4'-phosphopantetheine + ATP + H(+) = 3'-dephospho-CoA + diphosphate. It functions in the pathway cofactor biosynthesis; coenzyme A biosynthesis; CoA from (R)-pantothenate: step 4/5. Reversibly transfers an adenylyl group from ATP to 4'-phosphopantetheine, yielding dephospho-CoA (dPCoA) and pyrophosphate. This is Phosphopantetheine adenylyltransferase from Actinobacillus pleuropneumoniae serotype 3 (strain JL03).